The following is a 728-amino-acid chain: Sodium-dependent transporter snf-5 (728 aa).

The Cytoplasmic segment spans residues 1-84; the sequence is MADSGSNEEA…PEEEEEKRDG (84 aa). The disordered stretch occupies residues 1-84; sequence MADSGSNEEA…PEEEEEKRDG (84 aa). 2 stretches are compositionally biased toward low complexity: residues 29–50 and 60–73; these read QQVSQQSNQLSSQKSIQQSTQS and KNTTVTTTRPTLDT. Residues 85 to 105 traverse the membrane as a helical segment; the sequence is FGNSFEFVLTSLGLAVGLGNI. The Na(+) site is built by G97, A99, V100, and N104. Residues 106-119 lie on the Extracellular side of the membrane; that stretch reads WRFPTRAYNNGGSA. The helical transmembrane segment at 120–140 threads the bilayer; that stretch reads FLIPYLTCAFLFGLPAVYFEF. The Cytoplasmic portion of the chain corresponds to 141–162; sequence LTGQYQGKSPPVIFRRVRPILE. Residues 163–183 form a helical membrane-spanning segment; it reads GVGWMGVFVAALVAIYYIVIV. Topologically, residues 184 to 285 are extracellular; it reads SWISIYMINI…PSSGMLDFGG (102 aa). A disulfide bridge connects residues C204 and C214. Residues N210, N225, N232, N237, and N257 are each glycosylated (N-linked (GlcNAc...) asparagine). The helical transmembrane segment at 286–306 threads the bilayer; sequence FNWPVFAAMSVCWLLTGLGIL. Topologically, residues 307 to 314 are cytoplasmic; the sequence is KGAKIMGK. Residues 315–335 traverse the membrane as a helical segment; sequence ISYVSVLVPYVLVVVLFINGV. Residues 336 to 364 lie on the Extracellular side of the membrane; that stretch reads FQDGSGVGLEMYFGTPNYTKLYEQDTWTE. The N-linked (GlcNAc...) asparagine glycan is linked to N352. Residues 365 to 386 traverse the membrane as a helical segment; the sequence is ALKQLCFSLSVGHGGLISLSSY. S372 lines the Na(+) pocket. Topologically, residues 387–396 are cytoplasmic; sequence SPKRNNIFRD. Residues 397 to 417 form a helical membrane-spanning segment; the sequence is ALIVIIGDTTMSLVGGGAVFA. Over 418–451 the chain is Extracellular; sequence TLGYLAKATGQDVKDVVKSGLSLAFVVYPEAMTR. Residues 452-472 traverse the membrane as a helical segment; that stretch reads MPVPWLWCFIFFLMLFLLGAS. L469 is a binding site for Na(+). The Cytoplasmic portion of the chain corresponds to 473 to 495; that stretch reads TEIALVDVFCSCIYDQYPRFRNR. A helical membrane pass occupies residues 496 to 516; it reads KWIVVIAWCSVLYCIGLVFST. Residues 517–531 are Extracellular-facing; the sequence is RAGYYWFEMFDEYAA. A helical membrane pass occupies residues 532–552; the sequence is GFSSVCTVVCELLVMMYIYGF. Over 553-578 the chain is Cytoplasmic; that stretch reads RNVRDDITEVVGHARNKFTGAIGAHS. A helical membrane pass occupies residues 579 to 599; it reads WYFTANWMVISPSIALILVGL. Over 600–616 the chain is Extracellular; that stretch reads SFVREYPYMGRHDIYPA. Residues 617–637 form a helical membrane-spanning segment; the sequence is VFDIFGWFLSFLPVIIVPIFM. The Cytoplasmic segment spans residues 638 to 728; it reads LLNFIRCRNR…DTSSTYHQVY (91 aa). Acidic residues predominate over residues 687-699; it reads PWDEENVDLTDSE. A disordered region spans residues 687-728; it reads PWDEENVDLTDSESESRNAASGDVPIDDVATIDTSSTYHQVY. The span at 718–728 shows a compositional bias: polar residues; sequence IDTSSTYHQVY.

Belongs to the sodium:neurotransmitter symporter (SNF) (TC 2.A.22) family. As to expression, expressed in the INT-9 cells and posterior cells of the alimentary canal of the intestine, gut epithelial cells, the pharynx of some worms, two cells of the rectal gland, and in DVA, DVB and DVC neurons and amphid sensory neurons ASI, ADF and ASK neurons.

Its subcellular location is the cell membrane. Sodium-dependent amino acid transporter that mediates the uptake of the L-enantiomers of various amino acids, including L-proline and L-methionine, and also of acidic amino acids such as L-glutamic acid and L-aspartic acid. May additionally have a role in potassium-dependent amino acid absorption. In response to the availability of amino acid nutrients, may play a role in dauer formation. May play a role in promoting fertility. This is Sodium-dependent transporter snf-5 from Caenorhabditis elegans.